Consider the following 391-residue polypeptide: MKRLFTSESVTEGHPDKMCDQISDAILDAILAKDSNARVACETCTTTGLVMVMGEISTNCYVDIPKVVRETVREIGYDRAKYGFDCDTCSVMTTIDEQSADIAMGVDEALESKKGQKDEVEAVGAGDQGMMFGFATNETDAYMPLPIYMAHKLSRRLTEVRKDGTLDYLRPDGKTQVTVEYENNKPKRIDTIVISTQHGEEVSLETIEKDIKEHVINAVVPAELLDAETRYFINPTGRFVVGGPQGDSGLTGRKIIVDTYGGYGRHGGGAFSGKDSTKVDRSAAYAARWVAKNLVAAGIADKLEIQLAYAIGVAKPVSIEIETFGTGKMPEDKIVEIVEKVFDLRPGAIIRDLDLRKPIFKQTAAYGHFGRTDLDLPWERLNKIEEIKKYI.

H14 serves as a coordination point for ATP. Position 16 (D16) interacts with Mg(2+). E42 is a K(+) binding site. L-methionine-binding residues include E55 and Q98. Residues 98 to 108 are flexible loop; that stretch reads QSADIAMGVDE. Residues 172–174, 238–239, D247, 253–254, A270, and K274 each bind ATP; these read DGK, RF, and RK. D247 provides a ligand contact to L-methionine. L-methionine is bound at residue K278.

The protein belongs to the AdoMet synthase family. Homotetramer; dimer of dimers. Requires Mg(2+) as cofactor. K(+) is required as a cofactor.

The protein resides in the cytoplasm. It catalyses the reaction L-methionine + ATP + H2O = S-adenosyl-L-methionine + phosphate + diphosphate. It participates in amino-acid biosynthesis; S-adenosyl-L-methionine biosynthesis; S-adenosyl-L-methionine from L-methionine: step 1/1. In terms of biological role, catalyzes the formation of S-adenosylmethionine (AdoMet) from methionine and ATP. The overall synthetic reaction is composed of two sequential steps, AdoMet formation and the subsequent tripolyphosphate hydrolysis which occurs prior to release of AdoMet from the enzyme. In Clostridium botulinum (strain Alaska E43 / Type E3), this protein is S-adenosylmethionine synthase.